A 178-amino-acid polypeptide reads, in one-letter code: ATP synthase subunit delta (178 aa).

The protein belongs to the ATPase delta chain family. In terms of assembly, F-type ATPases have 2 components, F(1) - the catalytic core - and F(0) - the membrane proton channel. F(1) has five subunits: alpha(3), beta(3), gamma(1), delta(1), epsilon(1). F(0) has three main subunits: a(1), b(2) and c(10-14). The alpha and beta chains form an alternating ring which encloses part of the gamma chain. F(1) is attached to F(0) by a central stalk formed by the gamma and epsilon chains, while a peripheral stalk is formed by the delta and b chains.

The protein resides in the cell membrane. Functionally, f(1)F(0) ATP synthase produces ATP from ADP in the presence of a proton or sodium gradient. F-type ATPases consist of two structural domains, F(1) containing the extramembraneous catalytic core and F(0) containing the membrane proton channel, linked together by a central stalk and a peripheral stalk. During catalysis, ATP synthesis in the catalytic domain of F(1) is coupled via a rotary mechanism of the central stalk subunits to proton translocation. This protein is part of the stalk that links CF(0) to CF(1). It either transmits conformational changes from CF(0) to CF(1) or is implicated in proton conduction. The protein is ATP synthase subunit delta of Streptococcus pyogenes serotype M1.